Here is a 343-residue protein sequence, read N- to C-terminus: 3-dehydroquinate synthase (343 aa).

NAD(+) is bound by residues 61–66, 95–99, 119–120, Lys-132, Lys-141, and 159–162; these read SGEKYK, GVISD, TT, and FLKT. Zn(2+) contacts are provided by Glu-174, His-231, and His-248.

This sequence belongs to the sugar phosphate cyclases superfamily. Dehydroquinate synthase family. Co(2+) serves as cofactor. Requires Zn(2+) as cofactor. It depends on NAD(+) as a cofactor.

It localises to the cytoplasm. It carries out the reaction 7-phospho-2-dehydro-3-deoxy-D-arabino-heptonate = 3-dehydroquinate + phosphate. Its pathway is metabolic intermediate biosynthesis; chorismate biosynthesis; chorismate from D-erythrose 4-phosphate and phosphoenolpyruvate: step 2/7. Functionally, catalyzes the conversion of 3-deoxy-D-arabino-heptulosonate 7-phosphate (DAHP) to dehydroquinate (DHQ). The polypeptide is 3-dehydroquinate synthase (Helicobacter pylori (strain G27)).